The following is a 295-amino-acid chain: ATP synthase gamma chain (295 aa).

The protein belongs to the ATPase gamma chain family. As to quaternary structure, F-type ATPases have 2 components, CF(1) - the catalytic core - and CF(0) - the membrane proton channel. CF(1) has five subunits: alpha(3), beta(3), gamma(1), delta(1), epsilon(1). CF(0) has three main subunits: a, b and c.

Its subcellular location is the cell inner membrane. In terms of biological role, produces ATP from ADP in the presence of a proton gradient across the membrane. The gamma chain is believed to be important in regulating ATPase activity and the flow of protons through the CF(0) complex. This chain is ATP synthase gamma chain, found in Chlorobium phaeobacteroides (strain BS1).